The sequence spans 264 residues: tRNA1(Val) (adenine(37)-N6)-methyltransferase (264 aa).

It belongs to the methyltransferase superfamily. tRNA (adenine-N(6)-)-methyltransferase family.

The protein resides in the cytoplasm. The enzyme catalyses adenosine(37) in tRNA1(Val) + S-adenosyl-L-methionine = N(6)-methyladenosine(37) in tRNA1(Val) + S-adenosyl-L-homocysteine + H(+). In terms of biological role, specifically methylates the adenine in position 37 of tRNA(1)(Val) (anticodon cmo5UAC). In Shewanella pealeana (strain ATCC 700345 / ANG-SQ1), this protein is tRNA1(Val) (adenine(37)-N6)-methyltransferase.